A 240-amino-acid polypeptide reads, in one-letter code: Zinc import ATP-binding protein ZnuC (240 aa).

The ABC transporter domain occupies 1-219 (MSLLSIAALD…PAYRAMFGLD (219 aa)). Position 36-43 (36-43 (GPNGSGKT)) interacts with ATP.

Belongs to the ABC transporter superfamily. Zinc importer (TC 3.A.1.15.5) family. The complex is composed of two ATP-binding proteins (ZnuC), two transmembrane proteins (ZnuB) and a solute-binding protein (ZnuA).

It is found in the cell inner membrane. The enzyme catalyses Zn(2+)(out) + ATP(in) + H2O(in) = Zn(2+)(in) + ADP(in) + phosphate(in) + H(+)(in). Functionally, part of the ABC transporter complex ZnuABC involved in zinc import. Responsible for energy coupling to the transport system. This is Zinc import ATP-binding protein ZnuC from Chromohalobacter salexigens (strain ATCC BAA-138 / DSM 3043 / CIP 106854 / NCIMB 13768 / 1H11).